Reading from the N-terminus, the 428-residue chain is Enolase (428 aa).

Position 163 (glutamine 163) interacts with (2R)-2-phosphoglycerate. Glutamate 205 (proton donor) is an active-site residue. Positions 242, 285, and 312 each coordinate Mg(2+). Lysine 337, arginine 366, serine 367, and lysine 388 together coordinate (2R)-2-phosphoglycerate. Residue lysine 337 is the Proton acceptor of the active site.

This sequence belongs to the enolase family. It depends on Mg(2+) as a cofactor.

Its subcellular location is the cytoplasm. It is found in the secreted. The protein localises to the cell surface. It catalyses the reaction (2R)-2-phosphoglycerate = phosphoenolpyruvate + H2O. The protein operates within carbohydrate degradation; glycolysis; pyruvate from D-glyceraldehyde 3-phosphate: step 4/5. Functionally, catalyzes the reversible conversion of 2-phosphoglycerate (2-PG) into phosphoenolpyruvate (PEP). It is essential for the degradation of carbohydrates via glycolysis. The chain is Enolase from Rhodopirellula baltica (strain DSM 10527 / NCIMB 13988 / SH1).